Here is a 93-residue protein sequence, read N- to C-terminus: Protein FMP16, mitochondrial (93 aa).

A mitochondrion-targeting transit peptide spans 1–25 (MLRTTFLRTPRQLMRKSPRASFSIV). The interval 30-93 (FPHLKNNQDE…EQNRPDDGVY (64 aa)) is disordered. A compositionally biased stretch (basic and acidic residues) spans 35–93 (NNQDEAEKKEQGLFDSNKKRLDTLEHGKNPDYKQPGMEDLKKKGDDARIEQNRPDDGVY).

It is found in the mitochondrion. The chain is Protein FMP16, mitochondrial (FMP16) from Saccharomyces cerevisiae (strain ATCC 204508 / S288c) (Baker's yeast).